We begin with the raw amino-acid sequence, 290 residues long: Zinc finger protein-like 1 homolog (290 aa).

The segment at 1–43 adopts a B box-type; degenerate zinc-finger fold; the sequence is MGLCKCPKRQVTTQFCFEHRVNVCENCMVVNHTKCTVQSYIQW. Residues 53–101 form an RING-type; atypical zinc finger; it reads CPLCGSPLDNEDCVRLICYHVFHWKCLNAKQQSLPANTAPGGHTCPTCS. A compositionally biased stretch (polar residues) spans 156 to 168; the sequence is NGNTFASSMSQTR. The disordered stretch occupies residues 156–175; the sequence is NGNTFASSMSQTRSNERPES. The chain crosses the membrane as a helical span at residues 249 to 269; the sequence is WFLVLGGCIGFVCIIYVLATL.

This sequence belongs to the ZFPL1 family.

It localises to the membrane. The chain is Zinc finger protein-like 1 homolog from Aedes aegypti (Yellowfever mosquito).